A 493-amino-acid polypeptide reads, in one-letter code: D-aminoacyl-tRNA deacylase (493 aa).

Residues 22–37 (DLGDWERRDDPSRPDA) show a composition bias toward basic and acidic residues. 2 disordered regions span residues 22–44 (DLGDWERRDDPSRPDADGGGTYY) and 441–493 (PEGP…EPSE).

Belongs to the DtdA deacylase family. As to quaternary structure, monomer. Requires Zn(2+) as cofactor.

The catalysed reaction is a D-aminoacyl-tRNA + H2O = a tRNA + a D-alpha-amino acid + H(+). The enzyme catalyses glycyl-tRNA(Ala) + H2O = tRNA(Ala) + glycine + H(+). Its function is as follows. D-aminoacyl-tRNA deacylase with broad substrate specificity. By recycling D-aminoacyl-tRNA to D-amino acids and free tRNA molecules, this enzyme counteracts the toxicity associated with the formation of D-aminoacyl-tRNA entities in vivo. This chain is D-aminoacyl-tRNA deacylase, found in Halorubrum lacusprofundi (strain ATCC 49239 / DSM 5036 / JCM 8891 / ACAM 34).